Here is a 721-residue protein sequence, read N- to C-terminus: Polyribonucleotide nucleotidyltransferase (721 aa).

Residues D490 and D496 each contribute to the Mg(2+) site. The region spanning P557–K623 is the KH domain. The S1 motif domain maps to G625–P693. The segment at P693–D721 is disordered.

This sequence belongs to the polyribonucleotide nucleotidyltransferase family. The cofactor is Mg(2+).

The protein resides in the cytoplasm. It catalyses the reaction RNA(n+1) + phosphate = RNA(n) + a ribonucleoside 5'-diphosphate. Functionally, involved in mRNA degradation. Catalyzes the phosphorolysis of single-stranded polyribonucleotides processively in the 3'- to 5'-direction. In Deinococcus deserti (strain DSM 17065 / CIP 109153 / LMG 22923 / VCD115), this protein is Polyribonucleotide nucleotidyltransferase.